The following is a 303-amino-acid chain: Glycine--tRNA ligase alpha subunit (303 aa).

The protein belongs to the class-II aminoacyl-tRNA synthetase family. Tetramer of two alpha and two beta subunits.

The protein resides in the cytoplasm. It catalyses the reaction tRNA(Gly) + glycine + ATP = glycyl-tRNA(Gly) + AMP + diphosphate. This Cronobacter sakazakii (strain ATCC BAA-894) (Enterobacter sakazakii) protein is Glycine--tRNA ligase alpha subunit.